The primary structure comprises 967 residues: Serine/threonine-protein kinase/endoribonuclease ire-1 (967 aa).

A signal peptide spans M1–C21. The Lumenal portion of the chain corresponds to I22 to P438. N-linked (GlcNAc...) asparagine glycans are attached at residues N100 and N188. Residues F439–W455 form a helical membrane-spanning segment. The Cytoplasmic portion of the chain corresponds to Q456–D967. Positions E474 to G494 are disordered. Residues P479 to G494 show a composition bias toward polar residues. One can recognise a Protein kinase domain in the interval Y518 to F778. Residues L524–V532 and K546 each bind ATP. The Proton acceptor role is filled by D636. At S672 the chain carries Phosphoserine; by autocatalysis. Residues S781–D909 form the KEN domain. Residues R948–D967 are disordered. The span at N957–D967 shows a compositional bias: basic residues.

It belongs to the protein kinase superfamily. Ser/Thr protein kinase family. Mg(2+) is required as a cofactor. In terms of processing, autophosphorylated mainly on serine residues.

The protein localises to the endoplasmic reticulum membrane. The enzyme catalyses L-seryl-[protein] + ATP = O-phospho-L-seryl-[protein] + ADP + H(+). The catalysed reaction is L-threonyl-[protein] + ATP = O-phospho-L-threonyl-[protein] + ADP + H(+). The kinase domain is activated by trans-autophosphorylation. Kinase activity is required for activation of the endoribonuclease domain. Functionally, senses unfolded proteins in the lumen of the endoplasmic reticulum via its N-terminal domain which leads to enzyme auto-activation. The active endoribonuclease domain splices xbp-1 precursor mRNA to produce the mature form which then induces transcription of UPR target genes. Unfolded protein response (UPR) transcriptional activation by ire-1, as well as translational attenuation by pek-1 in a complementary pathway, maintains ER homeostasis. Regulates the transcriptional up-regulation of nucleoside-diphosphatase apy-1 and many other genes, upon ER stress. By activating the UPR pathway during non-lethal hypoxia pre-conditioning, confers adaptive protection to subsequent exposure to hypoxia. ire-1 and pek-1 are redundant genes that control a pathway essential for larval development and survival. Plays a role in the nuclear retention of unspliced mRNAs. The protein is Serine/threonine-protein kinase/endoribonuclease ire-1 of Caenorhabditis elegans.